Here is a 98-residue protein sequence, read N- to C-terminus: NADH-ubiquinone oxidoreductase chain 4L (98 aa).

A run of 3 helical transmembrane segments spans residues 1 to 21 (MSLT…GLLM), 29 to 49 (SLLC…MTIL), and 61 to 81 (IILL…LVMV).

This sequence belongs to the complex I subunit 4L family. Core subunit of respiratory chain NADH dehydrogenase (Complex I) which is composed of 45 different subunits.

It localises to the mitochondrion inner membrane. It catalyses the reaction a ubiquinone + NADH + 5 H(+)(in) = a ubiquinol + NAD(+) + 4 H(+)(out). Functionally, core subunit of the mitochondrial membrane respiratory chain NADH dehydrogenase (Complex I) which catalyzes electron transfer from NADH through the respiratory chain, using ubiquinone as an electron acceptor. Part of the enzyme membrane arm which is embedded in the lipid bilayer and involved in proton translocation. This is NADH-ubiquinone oxidoreductase chain 4L (MT-ND4L) from Chiroderma trinitatum (Little big-eyed bat).